The sequence spans 140 residues: MNQQDIKQKVLDVLDHHKVGSLATVQKGKPHSRYMTFFHDGLTIYTPTSKETHKAEEIENNPNVHILLGYDCEGFGDAYVEVAGKAKINNSAELKDKIWSSKLERWFDGKDDPNLVILEIEPEDIRLMNAGEKTPVSLEL.

This chain is General stress protein 26 (ydaG), found in Bacillus subtilis (strain 168).